A 649-amino-acid polypeptide reads, in one-letter code: Ubiquitin-associated and SH3 domain-containing protein B (649 aa).

At Ser20 the chain carries Phosphoserine. Position 23 is a phosphothreonine (Thr23). In terms of domain architecture, UBA spans 27-76; sequence NRQQRPGTIKHGSALDVLLSMGFPRARAQKALASTGGRSVQAACDWLFSH. Positions 254-319 constitute an SH3 domain; sequence ANHETLQVIY…PENYITKADE (66 aa). The segment at 380-649 is protein tyrosine phosphatase; sequence GPQKRCLFVC…FNWRETLLQE (270 aa). Arg390 is a catalytic residue. The active-site Tele-phosphohistidine intermediate is the His391. The active site involves His576.

Homodimer. Interacts with JAK2 (in vitro). Interacts with CBL. Part of a complex containing CBL and activated EGFR. Interacts with ubiquitin and with mono-ubiquitinated proteins. Interacts with ZAP70 (ubiquitinated form).

It is found in the cytoplasm. The protein resides in the nucleus. The catalysed reaction is O-phospho-L-tyrosyl-[protein] + H2O = L-tyrosyl-[protein] + phosphate. In terms of biological role, interferes with CBL-mediated down-regulation and degradation of receptor-type tyrosine kinases. Promotes accumulation of activated target receptors, such as T-cell receptors and EGFR, on the cell surface. Exhibits tyrosine phosphatase activity toward several substrates including EGFR, FAK, SYK, and ZAP70. Down-regulates proteins that are dually modified by both protein tyrosine phosphorylation and ubiquitination. The protein is Ubiquitin-associated and SH3 domain-containing protein B (UBASH3B) of Homo sapiens (Human).